The following is a 236-amino-acid chain: Ribosome maturation protein SDO1 homolog (236 aa).

The protein belongs to the SDO1/SBDS family.

This Pyrococcus abyssi (strain GE5 / Orsay) protein is Ribosome maturation protein SDO1 homolog.